Here is a 437-residue protein sequence, read N- to C-terminus: Peptidyl-prolyl cis-trans isomerase CYP38, chloroplastic (437 aa).

The transit peptide at 1-36 directs the protein to the chloroplast; it reads MAAAFASLPTFSVVNSSRFPRRRIGFSCSKKPLEVR. Residues 37 to 92 constitute a thylakoid transit peptide; the sequence is CSSGNTRYTKQRGAFTSLKECAISLALSVGLMVSVPSIALPPNAHAVANPVIPDVS. The region spanning 245-437 is the PPIase cyclophilin-type domain; sequence VKIKDNPNIE…LANPSYKIAG (193 aa).

As to expression, ubiquitous. Lower levels of expression in roots.

It localises to the plastid. The protein resides in the chloroplast thylakoid lumen. It carries out the reaction [protein]-peptidylproline (omega=180) = [protein]-peptidylproline (omega=0). In terms of biological role, required for the assembly and stabilization of PSII, but has no PPIases activity. The polypeptide is Peptidyl-prolyl cis-trans isomerase CYP38, chloroplastic (CYP38) (Arabidopsis thaliana (Mouse-ear cress)).